Consider the following 1053-residue polypeptide: Putative ABC transporter C family member 15 (1053 aa).

The ABC transmembrane type-1 1 domain occupies 1-180 (MSVDVQRITD…LPDLLSALVQ (180 aa)). 4 helical membrane-spanning segments follow: residues 11-31 (FIWY…AIYI), 36-56 (LGLG…CNYP), 125-145 (FILW…CMLM), and 151-171 (AGAV…IFGL). One can recognise an ABC transporter 1 domain in the interval 214 to 437 (VEIENGAFSW…NIGFEVLTQC (224 aa)). 249-256 (GAVGSGKS) contacts ATP. Helical transmembrane passes span 481 to 503 (LLVP…SNYW), 523 to 543 (ILLV…ARTI), 595 to 615 (MAVK…TIFV), 714 to 734 (LSHF…EGVI), and 738 to 758 (IAGL…TVIW). The ABC transmembrane type-1 2 domain maps to 483–765 (VPFIILAQSC…VIWNICNAEN (283 aa)). Positions 804–1036 (FRDLQVRYAE…EDSFFSKLIK (233 aa)) constitute an ABC transporter 2 domain. 836-843 (GRTGSGKS) is an ATP binding site.

It belongs to the ABC transporter superfamily. ABCC family. Conjugate transporter (TC 3.A.1.208) subfamily.

The protein localises to the membrane. The enzyme catalyses ATP + H2O + xenobioticSide 1 = ADP + phosphate + xenobioticSide 2.. In terms of biological role, pump for glutathione S-conjugates. This is Putative ABC transporter C family member 15 (ABCC15) from Arabidopsis thaliana (Mouse-ear cress).